We begin with the raw amino-acid sequence, 350 residues long: 3-isopropylmalate dehydrogenase (350 aa).

71-84 (GPKWADAPRHLRPE) contributes to the NAD(+) binding site. Arginine 91, arginine 101, arginine 129, and aspartate 220 together coordinate substrate. Residues aspartate 220, aspartate 244, and aspartate 248 each coordinate Mg(2+). 279–291 (GSAPDIAGKGLAN) contributes to the NAD(+) binding site.

Belongs to the isocitrate and isopropylmalate dehydrogenases family. LeuB type 1 subfamily. As to quaternary structure, homodimer. It depends on Mg(2+) as a cofactor. Mn(2+) is required as a cofactor.

It is found in the cytoplasm. The catalysed reaction is (2R,3S)-3-isopropylmalate + NAD(+) = 4-methyl-2-oxopentanoate + CO2 + NADH. The protein operates within amino-acid biosynthesis; L-leucine biosynthesis; L-leucine from 3-methyl-2-oxobutanoate: step 3/4. Functionally, catalyzes the oxidation of 3-carboxy-2-hydroxy-4-methylpentanoate (3-isopropylmalate) to 3-carboxy-4-methyl-2-oxopentanoate. The product decarboxylates to 4-methyl-2 oxopentanoate. This is 3-isopropylmalate dehydrogenase from Caulobacter vibrioides (strain ATCC 19089 / CIP 103742 / CB 15) (Caulobacter crescentus).